The primary structure comprises 69 residues: MKTQFVILMITVILMQMLVQTEGGILGKLWEGFKSIVGKRGLNDRDQLDDLFDSDLSDADIKLLKEMFK.

Residues 1-23 form the signal peptide; sequence MKTQFVILMITVILMQMLVQTEG. Valine 37 is subject to Valine amide. Residues 41-69 constitute a propeptide that is removed on maturation; it reads GLNDRDQLDDLFDSDLSDADIKLLKEMFK.

It belongs to the non-disulfide-bridged peptide (NDBP) superfamily. Short antimicrobial peptide (group 4) family. As to expression, expressed by the venom gland.

Its subcellular location is the secreted. It localises to the target cell membrane. Its function is as follows. Amphipathic peptide that possesses relatively strong activities against Gram-positive bacteria and a fungus, but has very weak antimicrobial activities against Gram-negative bacteria. Also exhibits very low hemolytic activities against human erythrocytes (64 uM induce 21% of hemolysis). Minimal inhibitory concentration (MIC) are the following: 8 uM against S.aureus, 32 uM against B.magaterium, 32 uM against M.luteus, 28 uM against vancomycin-resistant Enterococci, 14 uM against methicillin-resistant S.aureus, 62 uM against E.coli, &gt;87 uM against P.putida, &gt;87 uM against K.oxytoca, 76 uM against E.cloacae, 72 uM against S.enterica and 16 uM against the fungus C.tropicalis. This chain is Pantinin-1, found in Pandinus imperator (Emperor scorpion).